The chain runs to 820 residues: Pentatricopeptide repeat-containing protein At3g22150, chloroplastic (820 aa).

A disordered region spans residues 1–42 (MAGSALPLPPPPPLSLQSPSQNQTRHSSTFSPPTLTPQTPSI). Residues 1-50 (MAGSALPLPPPPPLSLQSPSQNQTRHSSTFSPPTLTPQTPSIRSRLSKIC) constitute a chloroplast transit peptide. Polar residues predominate over residues 22–42 (NQTRHSSTFSPPTLTPQTPSI). 17 PPR repeats span residues 69 to 99 (TTVLWNTIIIGFICNNLPHEALLFYSRMKKT), 106 to 136 (DAYTYSSTLKACAETKNLKAGKAVHCHLIRC), 141 to 177 (SRVVHNSLMNMYVSCLNAPDCFEYDVVRKVFDNMRRK), 178 to 212 (NVVAWNTLISWYVKTGRNAEACRQFGIMMRMEVKP), 213 to 247 (SPVSFVNVFPAVSISRSIKKANVFYGLMLKLGDEY), 250 to 284 (DLFVVSSAISMYAELGDIESSRRVFDSCVERNIEV), 285 to 316 (WNTMIGVYVQNDCLVESIELFLEAIGSKEIVS), 317 to 347 (DEVTYLLAASAVSALQQVELGRQFHGFVSKN), 352 to 382 (PIVIVNSLMVMYSRCGSVHKSFGVFLSMRER), 383 to 417 (DVVSWNTMISAFVQNGLDDEGLMLVYEMQKQGFKI), 418 to 452 (DYITVTALLSAASNLRNKEIGKQTHAFLIRQGIQF), 485 to 519 (DQATWNSMISGYTQNGHTEKTFLVFRKMLEQNIRP), 520 to 550 (NAVTVASILPACSQIGSVDLGKQLHGFSIRQ), 555 to 585 (NVFVASALVDMYSKAGAIKYAEDMFSQTKER), 586 to 620 (NSVTYTTMILGYGQHGMGERAISLFLSMQESGIKP), 621 to 651 (DAITFVAVLSACSYSGLIDEGLKIFEEMREV), and 657 to 691 (SSEHYCCITDMLGRVGRVNEAYEFVKGLGEEGNIA). The segment at 693–770 (LWGSLLGSCK…EVGRSGIEIA (78 aa)) is type E motif. The type E(+) motif stretch occupies residues 771-801 (GYVNCFVSRDQEHPHSSEIYDVIDGLAKDMR).

The protein belongs to the PPR family. PCMP-E subfamily.

It localises to the plastid. It is found in the chloroplast. The polypeptide is Pentatricopeptide repeat-containing protein At3g22150, chloroplastic (PCMP-E95) (Arabidopsis thaliana (Mouse-ear cress)).